We begin with the raw amino-acid sequence, 541 residues long: Putative transferase YhbX (541 aa).

Over 1–60 (MTVFNKFARSFKSHWLLYLSVIVFGITNLVASSGAHMVQRLLFFVLTILVVKRISSLPLR) the chain is Periplasmic. A helical transmembrane segment spans residues 61-81 (LLVAAPFVLLTAADMSISLYS). Residues 82–110 (WCTFGTTFNDGFAISVLQSDPDEVAKMLG) lie on the Cytoplasmic side of the membrane. A helical membrane pass occupies residues 111 to 131 (MYSPYLCAFAFLSLLFLAVII). The Periplasmic segment spans residues 132 to 141 (KYDVSLPTKK). A helical transmembrane segment spans residues 142–162 (VTGILLLIVISGSLFSACQFA). The Cytoplasmic segment spans residues 163-264 (YKDAKNKNAF…RKQIKLFNQA (102 aa)). Residues 265–285 (ISGAPYTALSVPLSLTADSVL) traverse the membrane as a helical segment. Topologically, residues 286–541 (SHDIHNYPDN…QGNPTPEGQG (256 aa)) are periplasmic.

Belongs to the phosphoethanolamine transferase family.

The protein localises to the cell inner membrane. There are several lipid A forms in this strain, including a phosphoethanolamine (1-O-P-pEtN) form; overexpression of this gene does not lead to higher levels of the 1-O-P-pEtN form of lipid A. The sequence is that of Putative transferase YhbX (yhbX) from Escherichia coli O157:H7.